Consider the following 400-residue polypeptide: Snake venom metalloproteinase H1 (400 aa).

The signal sequence occupies residues 1-6; that stretch reads FPYQGS. The propeptide occupies 7-176; that stretch reads SIILESGNVN…KKASQLIVST (170 aa). Residues 180–377 enclose the Peptidase M12B domain; that stretch reads RYMEIVIVVD…ENPPCILNKP (198 aa). 2 residues coordinate Ca(2+): glutamate 183 and aspartate 267. 3 disulfides stabilise this stretch: cysteine 291–cysteine 372, cysteine 331–cysteine 356, and cysteine 333–cysteine 339. Residue histidine 316 participates in Zn(2+) binding. The active site involves glutamate 317. Zn(2+)-binding residues include histidine 320 and histidine 326. Positions 372, 375, 387, 390, 392, 394, and 400 each coordinate Ca(2+). The propeptide occupies 378 to 400; that stretch reads LRTDTVSTPVSGNELLEAGKDYD.

It belongs to the venom metalloproteinase (M12B) family. P-I subfamily. In terms of assembly, monomer. The cofactor is Zn(2+). As to expression, expressed by the venom gland.

The protein resides in the secreted. In terms of biological role, snake venom metalloproteinase that impairs hemostasis in the envenomed animal. This chain is Snake venom metalloproteinase H1, found in Deinagkistrodon acutus (Hundred-pace snake).